Here is a 153-residue protein sequence, read N- to C-terminus: CASP-like protein 5B1 (153 aa).

Residues 1–20 (MRELAGSPGTWSGLSLRVGQ) are Cytoplasmic-facing. The chain crosses the membrane as a helical span at residues 21-41 (LVFAAASVCATASALGFAAYT). Residue Ala42 is a topological domain, extracellular. Residues 43–63 (FCYLIASMGLQALWSLGLACL) traverse the membrane as a helical segment. The Cytoplasmic portion of the chain corresponds to 64–76 (DCYALKFKKDLHS). Residues 77-97 (AVLLSLFVVGDWVTAILSFAA) form a helical membrane-spanning segment. Residues 98 to 128 (SCSAAGVVVLFDRDIYACRNPQLPCGRFELA) lie on the Extracellular side of the membrane. The helical transmembrane segment at 129–149 (IACAFLSWAFSATSALVMFWL) threads the bilayer. Topologically, residues 150–153 (LASL) are cytoplasmic.

This sequence belongs to the Casparian strip membrane proteins (CASP) family. In terms of assembly, homodimer and heterodimers.

Its subcellular location is the cell membrane. The sequence is that of CASP-like protein 5B1 from Oryza sativa subsp. indica (Rice).